We begin with the raw amino-acid sequence, 60 residues long: Protein translocase subunit SecE (60 aa).

Residues 31–51 (IIVVSTVIFFLVFFYALDIGI) form a helical membrane-spanning segment.

Belongs to the SecE/SEC61-gamma family. In terms of assembly, component of the Sec protein translocase complex. Heterotrimer consisting of SecY, SecE and SecG subunits. The heterotrimers can form oligomers, although 1 heterotrimer is thought to be able to translocate proteins. Interacts with the ribosome. Interacts with SecDF, and other proteins may be involved. Interacts with SecA.

The protein resides in the cell membrane. Its function is as follows. Essential subunit of the Sec protein translocation channel SecYEG. Clamps together the 2 halves of SecY. May contact the channel plug during translocation. The protein is Protein translocase subunit SecE of Staphylococcus epidermidis (strain ATCC 35984 / DSM 28319 / BCRC 17069 / CCUG 31568 / BM 3577 / RP62A).